A 521-amino-acid chain; its full sequence is Sphingolipid C9-methyltransferase 2 (521 aa).

2 consecutive transmembrane segments (helical) span residues 60 to 80 (VLISILTIVPWWLSWKVGGGF) and 85 to 105 (FFAIIVDLPMLAAWWLTISAI). Residues 225–226 (YT), 262–270 (MLDIGCGWG), 288–293 (TLGRNQ), and 318–319 (YR) each bind S-adenosyl-L-methionine.

Belongs to the CFA/CMAS family.

It is found in the membrane. The catalysed reaction is a (4E,8E)-4-sphinga-4,8-dienine ceramide + S-adenosyl-L-methionine = a 9-methyl-(4E,8E)-sphinga-4,8-dienine ceramide + S-adenosyl-L-homocysteine + H(+). The protein operates within lipid metabolism; sphingolipid metabolism. Catalyzes methylation of the sphingoid base component of glucosylceramides (GluCers) at the C9-position. Sphingolipid C9-methylation requires 4,8-desaturated ceramides as substrates. Glucosylceramides play important roles in growth, differentiation and pathogenicity. The methyl group at the C9-position distinguishes fungal glucosylceramides from those of plants and animals and may thus play a role in host-pathogen interactions enabling the host to recognize the fungal attack and initiate specific defense responses. However, C-9 methylation of GlcCers is not essential for the sensitivity of F.graminearum to plant defensins MsDef1 and RsAFP2. This Gibberella zeae (strain ATCC MYA-4620 / CBS 123657 / FGSC 9075 / NRRL 31084 / PH-1) (Wheat head blight fungus) protein is Sphingolipid C9-methyltransferase 2.